The chain runs to 110 residues: Small ubiquitin-related modifier 3 (110 aa).

Residues Lys-5 and Lys-7 each participate in a glycyl lysine isopeptide (Lys-Gly) (interchain with G-Cter in SUMO2) cross-link. A Glycyl lysine isopeptide (Lys-Gly) (interchain with G-Cter in SUMO); alternate cross-link involves residue Lys-11. Residue Lys-11 forms a Glycyl lysine isopeptide (Lys-Gly) (interchain with G-Cter in SUMO2); alternate linkage. Residues 15–92 enclose the Ubiquitin-like domain; the sequence is DHINLKVAGQ…IDVFQQQTGG (78 aa). A compositionally biased stretch (polar residues) spans 89 to 101; that stretch reads QTGGTASRASVPT. The interval 89–110 is disordered; that stretch reads QTGGTASRASVPTPSHFPDICY. Residue Gly-92 forms a Glycyl lysine isopeptide (Gly-Lys) (interchain with K-? in acceptor proteins) linkage. The propeptide occupies 93 to 110; it reads TASRASVPTPSHFPDICY.

It belongs to the ubiquitin family. SUMO subfamily. In terms of assembly, interacts with SAE2 and UBE2I. Covalently attached to a number of proteins. Interacts with USP25 (via ts SIM domain); the interaction sumoylates USP25 and inhibits its ubiquitin hydrolyzing activity. Interacts with BMAL1. Post-translationally, polymeric chains can be formed through Lys-11 cross-linking. Cleavage of precursor form by SENP1, SENP2 or SENP5 is necessary for function.

Its subcellular location is the cytoplasm. The protein localises to the nucleus. The protein resides in the PML body. Its function is as follows. Ubiquitin-like protein which can be covalently attached to target lysines either as a monomer or as a lysine-linked polymer. Does not seem to be involved in protein degradation and may function as an antagonist of ubiquitin in the degradation process. Plays a role in a number of cellular processes such as nuclear transport, DNA replication and repair, mitosis and signal transduction. Covalent attachment to its substrates requires prior activation by the E1 complex SAE1-SAE2 and linkage to the E2 enzyme UBE2I, and can be promoted by an E3 ligase such as PIAS1-4, RANBP2 or CBX4. Plays a role in the regulation of sumoylation status of SETX. This is Small ubiquitin-related modifier 3 (Sumo3) from Rattus norvegicus (Rat).